The primary structure comprises 221 residues: uncharacterized protein (221 aa).

The N-terminal stretch at 1–26 (MVRLVPRAFAATVALLAAGFSPATAS) is a signal peptide.

This is an uncharacterized protein from Mycobacterium tuberculosis (strain CDC 1551 / Oshkosh).